Here is a 161-residue protein sequence, read N- to C-terminus: Nucleotide-binding protein Pput_4372 (161 aa).

Belongs to the YajQ family.

Nucleotide-binding protein. The chain is Nucleotide-binding protein Pput_4372 from Pseudomonas putida (strain ATCC 700007 / DSM 6899 / JCM 31910 / BCRC 17059 / LMG 24140 / F1).